The sequence spans 89 residues: Small ribosomal subunit protein uS15 (89 aa).

Belongs to the universal ribosomal protein uS15 family. In terms of assembly, part of the 30S ribosomal subunit. Forms a bridge to the 50S subunit in the 70S ribosome, contacting the 23S rRNA.

Its function is as follows. One of the primary rRNA binding proteins, it binds directly to 16S rRNA where it helps nucleate assembly of the platform of the 30S subunit by binding and bridging several RNA helices of the 16S rRNA. Forms an intersubunit bridge (bridge B4) with the 23S rRNA of the 50S subunit in the ribosome. The sequence is that of Small ribosomal subunit protein uS15 from Paenarthrobacter aurescens (strain TC1).